A 325-amino-acid chain; its full sequence is Dehydrogenase/reductase SDR family member 7B (325 aa).

The Cytoplasmic portion of the chain corresponds to 1–17 (MISPSSRKGMLKERAMD). The chain crosses the membrane as a helical; Signal-anchor for type II membrane protein span at residues 18–38 (LVTQTTILPLLFGCLGIFSLF). The Lumenal segment spans residues 39–325 (RLLQRTRSKA…ARKERKSKNS (287 aa)). Residues Ser-62 and Leu-64 each contribute to the NAD(+) site. Ser-194 is a binding site for substrate. Positions 207, 211, and 242 each coordinate NAD(+). Tyr-207 serves as the catalytic Proton acceptor.

The protein belongs to the short-chain dehydrogenases/reductases (SDR) family.

It localises to the endoplasmic reticulum membrane. In terms of biological role, putative oxidoreductase. The sequence is that of Dehydrogenase/reductase SDR family member 7B (Dhrs7b) from Rattus norvegicus (Rat).